Reading from the N-terminus, the 349-residue chain is MPFTQFLDKYSDNLAIQYAIIFALLLGVFKLTVFSLKFASLIYDIFLAPATDFSKYGAASGKWAVVTGASDGIGKEYAFQLAKKGFSIVLVSRTQSKLELIATEIESKYKVNTKIVAFDASTDDEENYLKLEKAVFDLPVTILINNVGQSHSIPVPFLKTEKKELKDIITINTTATLRITQIVAPIIVSTVENPHPKQLRGLILTMGSFGGLLPTPYLATYSGSKSFLQAWSAALAGELQADHVDVELVISYLVASAMSKIKRTSLSIPNPKQFVTSTLNGVGRRNGAQERFATSTPYWTHALMHFAIDNTVGVYSKIANKLNLQMHQSIRRRALKKAARLAAAAEKKD.

The helical transmembrane segment at alanine 19–alanine 39 threads the bilayer. Valine 65, aspartate 119, asparagine 146, tyrosine 221, lysine 225, valine 254, and serine 256 together coordinate NADP(+). Residue tyrosine 221 is the Proton donor of the active site. Catalysis depends on lysine 225, which acts as the Lowers pKa of active site Tyr.

The protein belongs to the short-chain dehydrogenases/reductases (SDR) family.

It is found in the endoplasmic reticulum membrane. It carries out the reaction a very-long-chain (3R)-3-hydroxyacyl-CoA + NADP(+) = a very-long-chain 3-oxoacyl-CoA + NADPH + H(+). It participates in lipid metabolism; fatty acid biosynthesis. In terms of biological role, component of the microsomal membrane bound fatty acid elongation system, which produces the 26-carbon very long-chain fatty acids (VLCFA) from palmitate. Catalyzes the reduction of the 3-ketoacyl-CoA intermediate that is formed in each cycle of fatty acid elongation. VLCFAs serve as precursors for ceramide and sphingolipids. In Candida albicans (strain SC5314 / ATCC MYA-2876) (Yeast), this protein is Very-long-chain 3-oxoacyl-CoA reductase.